We begin with the raw amino-acid sequence, 286 residues long: Transmembrane protein 156 (286 aa).

Topologically, residues 1–4 (MTET) are cytoplasmic. Residues 5–25 (AFLKLFVAIVITFILVLPEFF) form a helical membrane-spanning segment. Residues 26 to 214 (KTPKERTLEL…KSVTCSMKIT (189 aa)) are Extracellular-facing. N45, N54, N76, and N142 each carry an N-linked (GlcNAc...) asparagine glycan. The helical transmembrane segment at 215-235 (WYVLVLFVFMLGIIFIIYKIL) threads the bilayer. Over 236–286 (EEHRRVWRRQSHNYKSSSVLFRGHDSGKLSTLNVRVIPGYPWTIWTRDFDE) the chain is Cytoplasmic.

It localises to the membrane. This chain is Transmembrane protein 156 (Tmem156), found in Rattus norvegicus (Rat).